The following is a 4481-amino-acid chain: MPDLRIDYLETVSSVLLKFKADKWGKLIGAEENMALLTEFFDKIDNPVLVLTLNAAGMIIPCLGFPESLKSKGVYFIKMKPENITKDNYKTHLIYGDISPTTVDQLIAVVEEVLYSLLNQSENMDGWPRVVSEDIVKQVHRLKNEMFVMGGKIKGKTLLPIPEHLGSLDGTLDSMERIPSSMDNSLLHSIETIIIDWSHQIRDVLSKDSAQALLDGLHPLPRVEFEFWDARLMNLQCIHEQLNRPKVNKIVEILEKAKSCYWPALQNVYMNVTQGLKEANGIVLYLKPLRILLEEMEQADFTMLPSFIVKVLSTICFIWATSEHYNTPSRVIVILREFCNQIIEMTRTYLSPDEVLKGLQGEIEEVLGNISLSVSVLKGLFQAYDFCCANMKLFFKDRPPVPWEFPSSLAFSRMNSFFHRVQTIEDLYKTAIEFLKLEKIELGGVWGNILGNLVTQIYDEVFELVKVFAECKYDPLDPGDSSFDDDYSDFETKIQDLDRRLATIFCQAFDDCNCMESSAKLLYMCGGLLERPLILVEVVPRYSVMLEMFNTELDNAKLMYDAQMAASADGQIPPIHKNMSPVSGQLKWSLELQERLEVSMKYLKHIEHPVMSSMEAKLIYDKYDEMMGLLQSCRMKKYQQWVEGVDQDCHFNLGQPLIQRDPFTSLIQVNFSKALVAVLREVKYLNFQQQKEIPESAEKLFSENETFRKFVGNLELIVGWYNEIKTTVKDVEFPLIKSELEAIDVKLLSAETTLFWNGENVMEYIQEMREMLYNLQNRIQKAKQNVEGITQAMQEWSANPLFERKDNKKEALLDLDGRVANLNKRYAAVKEAGVRIQAMVVENAELFRADTTSQSWKDYVNYIDTVVLDEFDRFIRKSLNYLMDNMTMDESIAPLFEIRMELDKDGLTYNPSLEMGDEAGFLSLIEGLINDLYNVARLIPRLAKGRLNYKSDLEDITDLIEMREEVSSLVIGAMKVAEEYQDSFERYSYLWVDDLQEFMKNFLIFGHAPTPEELDTKTDDTIPKTPPTLAQFQQQIDSYEKLYEEVSSCENTKVFHGWLQCDCRPFKQTLLNTIKRWSFLFKRYLNNHVINSLADLESFMNITRTALKKPLKEGDYDGLVEVMGHLMKVKERQVATDSMFEPLKQTIELLKSYGEEMPEEIYLKLQELPEQWTNTKKLAIQVKQNVAPLQANEVNILRRKCQQFELKQHEFREKFRRDAPFSFSDPEPYKSLNKIYLLYGVMEALCKSASLFEVTVPDYKQLKACHREVRLLKELWDMIVMVNTSIDDWKTTKWKDINVEQMDIDCKKFAKDVRSLDKEMKPWDAFVGLDNTVKNMITSLRAVSELQNPAIRDRHWQQLMQATQVKFEMSEETTLADLLQLNLHKYEDEVRNIVDKAVKESGMEKVLKTLDITWTTMEFEHELHPRTGTMMLKSDEVLVETLEDNQVQLQNLMMSKYLSHFLKEVTSWQQKLSTADSVISIWFEVQRTWSHLESIFIGSEDIRAQLPEDSKRFDAIDQEFKALMEDAVKTPNVVEATNKPDLYNKLENLKMSLAVCEKALAEYLETKRLAFPRFYFVSSADLLDILSNGNDPVEVSRHLSKLFDSLCKLKFRLDASGKPLKFGLGMYSKEDEFVDFDKECDLSGQVEVWLNRVLDRMRATLRHEIPEAVVTYEEKPREQWIFDYPAQIWWTTEVGLAFARLEEGYENAIKDYNKKQISQLNALITLLIGNLTAGDRMKIMTICTIDVHARDVVAKMITVESSQAFTWQSQLRHRWDEEKKHCFANICDAQIKYSYEYLGNTPRLVITPLTDRCYITLTQSLHLIMGGAPAGPAGTGKTETTKDLGRALGTMVYVFNCSEQMDYKSCGNIYKGLAQTGAWGCFDEFNRISVEVLSVIAVQVKCVQDAIRAKKKKFNFLGEIISLVPTVGIFITMNPGYAGRTELPENLKALFRPCAMVVPDFELICEIMLVAEGFLDARLLARKFITLYTLCKELLSKQDHYDWGLRAIKSVLVVAGSLKRGDPTRAEDQVLMRALRDFNIPKIVTDDLPVFMGLIGDLFPALDVPRKRDLNFEKIIKQSIVELKLQAEDSFVLKVVQLEELLQVRHSVFVIGNAGSGKSQVLKSLNKTYQNLKRKPVAVDLDPKAVTCDELFGIINPATREWKDGLFSTIMRDLANLTHEGPKWIVLDGDIDPMWIESLNTVMDDNKVLTLASNERIPLNRTMRLVFEISHLRTATPATVSRAGILYINPADLGWNPVVSSWIERRKVQSEKANLIILFDKYLPTCLDKLRIGFKRITPVPEITVIQTILYLLECLLTEKNAPPDSPKELYELYFVFACFWAFGGAMFQDQLIDYRVEFSKWWINEFKTIKLPSQGTIFDYYIDPETKKFLPWTDKVPNFELDPDIPLQASLVHTTETIRIRYFIDLLMEKAWPVMLVGNAGTGKSVLMGDKLENLSTDDYLVQAVPFNFYTTSAMLQGVLEKPLEKKSGRNYGPPGTKKLIYFIDDMNMPEVDKYGTVAPHTLIRQHMDHRHWYDRQKLTLKDVHNCQYVACMNPTSGSFTIDPRLQRHFCVFAVSFPGQEALTSIYNTILAQHLSFRSAPLVIQRLSSHLVTAALALHQKVSATFLPTAIKFHYIFNLRDLSNIFQGILFSTAEILKTPLDLVRLWLHEAERVYGDKMVDEKDQETLHRVTIASVKKFFDDLGEENLFAKPNIFCHFTQGIGDPKYFPVTDVAQLNKLLKDVLDSYNEVNAVMNLVLFEDAVAHICKINRILESPRGNALLVGVGGSGKQSLSRLAAYISALDVFQITLKKGYAIPDLKMDLATQYIKSAVKNVPSVFLMTDSQVAEEQFLVLINDLLASGEIPGLFGDEDLENIISSMRPQVKSLGIADTREACWKFFIEKVRRQLKVILCFSPVGSVLRVRARKFPAVVNCTAINWFHEWPEDALVSVSARFLEETEGIEPEVKTSISLFMAYVHTTVNEMSKIYLTIERRYNYTTPKTFLEQIKLYQNLLAKKRMELVAKIERLENGLMKLQSTASQVDDLKAKLAVQETELKQKNENADKLIQVVGVETEKVSKEKAIADEEEMKVEVINKNVTEKQKACETDLAKAEPALLAAQEALDTLNKNNLTELKSFGSPPDAVVNVTAAVMILTAPGGKIPKDKSWKAAKIMMGKVDTFLDSLKKFDKEHIPEACLKAFKPYQGNPTFDPEFIRSKSTAAAGLCSWCINIVRFYEVYCDVAPKRQALEEANAELAEAQEKLSRIKNKIAELNANLSNLTSAFEKATAEKIKCQQEADATNRVISLANRLVGGLASENVRWAESVENFKSQGVTLCGDVLLISAFVSYVGYFTKKYRNELMEKFWIPYINKLKVPIPITEGLDPLTLLTDDADVATWNNQGLPSDRMSTENATILCNTERWPLIVDAQLQGIKWIKNKYGSDLQAIRLGQKSYLDIIEQAISAGDTLLIENIGETVDPVLDPLLGRNTIKKGRFIKIGDKEVEYHPSFRLILHTKYFNPHYKPEMQAQCTLINFLVTRDGLEDQLLAAVVAKERPDLEQLKANLTKSQNEFKIVLKELEDSLLARLSAASGNFLGDTALVENLETTKHTANEIEEKVQEAKITEVKINEARENYRPAAERASLLYFILNDLNKINPIYQFSLKAFNVVFEKAIQKTAPADEVKQRVINLTDEITYSVYMYTARGLFERDKLIFLAQVTFQVLSMKKELNPVELDFLLRFPFKAGVVSPVDFLQHQSWGGIKALSEMDEFKNLDSDIEGSAKRWKKLVESEAPEKEIFPKEWKNKTALQKLCMVRCMRPDRMTYAVKNFVEEKMGSKFVEGRSVEFSKSYKESSPSTPIFFILSPGVDPLKDVEALGKKLGFTIDNGKLHNVSLGQGQEVVAENALDVAAEKGHWVILQVRGSLPQNIHLVARWLGILDKKVERYSSGSHEDYRVFISAEPAPTAETHIIPQGILENAIKITNEPPTGMYANLHKALDLFTQDTLEMCTKEIEFKCILFALCYFHAVVAERRKFGAQGWNRSYPFNNGDLTISINVLYNYLEANSKVPWDDLRYLFGEIMYGGHITDDWDRRLCRTYLAEYIRVEMLEGEVLLAPGFQIPPNLDYKGYHEYIDENLPPESPYLYGLHPNAEIGFLTVTSEKLFRTVLEMQPKETDSGAGTGVSREEKVGAVPVPEGSLGSEGSLGTIGLPGTGFQVKAVLDDILEKIPETFNMAEIMAKAAEKTPYVVVAFQECERMNILTNEMRRSLKELNLGLKGELTITTDMEDLSTALFYDTVPDTWVARAYPSMMGLAAWYADLLQRIRELESWTTDFALPTTVWLAGFFNPQSFLTAIMQSMARKNEWPLDKMCLSVEVTKKNREDMTAPPREGSYVYGLFMEGARWDTQTGVIAEARLKDLTPVMPVIFIKAIPVDRMETKNIYECPVYKTRIRGPTYVWTFNLKTKEKAAKWILAAVALLLQV.

The segment at 1–1792 (MPDLRIDYLE…FANICDAQIK (1792 aa)) is stem. The Kelch 1 repeat unit spans residues 521 to 569 (LLYMCGGLLERPLILVEVVPRYSVMLEMFNTELDNAKLMYDAQMAASAD). Positions 759–826 (ENVMEYIQEM…GRVANLNKRY (68 aa)) form a coiled coil. 2 TPR repeats span residues 1533–1566 (VVEA…YLET) and 1688–1722 (IWWT…QLNA). AAA stretches follow at residues 1793–2014 (YSYE…VLVV), 2074–2295 (KIIK…IGFK), 2401–2649 (ELDP…IFQG), and 2747–2996 (SYNE…ERRY). ATP is bound by residues 1831-1838 (GPAGTGKT) and 2112-2119 (GNAGSGKS). The Kelch 2 repeat unit spans residues 2229–2275 (ISHLRTATPATVSRAGILYINPADLGWNPVVSSWIERRKVQSEKANL). Residues 2439–2446 (GNAGTGKS) and 2785–2792 (GVGGSGKQ) contribute to the ATP site. A Kelch 3 repeat occupies 2782-2834 (LLVGVGGSGKQSLSRLAAYISALDVFQITLKKGYAIPDLKMDLATQYIKSAVK). 2 coiled-coil regions span residues 3011–3071 (YQNL…IQVV) and 3241–3293 (DVAP…EKIK). The interval 3011–3297 (YQNLLAKKRM…TAEKIKCQQE (287 aa)) is stalk. AAA regions lie at residues 3389 to 3616 (LTDD…EIEE) and 3826 to 4059 (VKNF…VLYN). One copy of the TPR 3 repeat lies at 4138-4173 (PESPYLYGLHPNAEIGFLTVTSEKLFRTVLEMQPKE). Kelch repeat units follow at residues 4272-4321 (NLGL…DLLQ) and 4339-4385 (VWLA…DMTA).

This sequence belongs to the dynein heavy chain family. In terms of assembly, consists of at least two heavy chains and a number of intermediate and light chains.

It is found in the cytoplasm. The protein resides in the cytoskeleton. Its subcellular location is the flagellum axoneme. Its function is as follows. Force generating protein component of the outer dynein arms (ODAs) in the sperm flagellum. Produces force towards the minus ends of microtubules. Dynein has ATPase activity; the force-producing power stroke is thought to occur on release of ADP. Plays a major role in sperm motility, implicated in sperm flagellar assembly and beating. The sequence is that of Dynein axonemal heavy chain 17 from Mus musculus (Mouse).